Here is a 429-residue protein sequence, read N- to C-terminus: Enolase 1 (429 aa).

Gln163 contacts (2R)-2-phosphoglycerate. The Proton donor role is filled by Glu205. Positions 242, 287, and 314 each coordinate Mg(2+). (2R)-2-phosphoglycerate is bound by residues Lys339, Arg368, Ser369, and Lys390. Residue Lys339 is the Proton acceptor of the active site.

Belongs to the enolase family. Requires Mg(2+) as cofactor.

Its subcellular location is the cytoplasm. The protein resides in the secreted. It is found in the cell surface. The enzyme catalyses (2R)-2-phosphoglycerate = phosphoenolpyruvate + H2O. The protein operates within carbohydrate degradation; glycolysis; pyruvate from D-glyceraldehyde 3-phosphate: step 4/5. Functionally, catalyzes the reversible conversion of 2-phosphoglycerate (2-PG) into phosphoenolpyruvate (PEP). It is essential for the degradation of carbohydrates via glycolysis. This Cupriavidus metallidurans (strain ATCC 43123 / DSM 2839 / NBRC 102507 / CH34) (Ralstonia metallidurans) protein is Enolase 1.